Here is a 320-residue protein sequence, read N- to C-terminus: Acetyl-coenzyme A carboxylase carboxyl transferase subunit alpha (320 aa).

The 254-residue stretch at 42–295 (IGDKAAQALK…GDAIAEAFND (254 aa)) folds into the CoA carboxyltransferase C-terminal domain.

This sequence belongs to the AccA family. In terms of assembly, acetyl-CoA carboxylase is a heterohexamer composed of biotin carboxyl carrier protein (AccB), biotin carboxylase (AccC) and two subunits each of ACCase subunit alpha (AccA) and ACCase subunit beta (AccD).

The protein resides in the cytoplasm. It carries out the reaction N(6)-carboxybiotinyl-L-lysyl-[protein] + acetyl-CoA = N(6)-biotinyl-L-lysyl-[protein] + malonyl-CoA. The protein operates within lipid metabolism; malonyl-CoA biosynthesis; malonyl-CoA from acetyl-CoA: step 1/1. In terms of biological role, component of the acetyl coenzyme A carboxylase (ACC) complex. First, biotin carboxylase catalyzes the carboxylation of biotin on its carrier protein (BCCP) and then the CO(2) group is transferred by the carboxyltransferase to acetyl-CoA to form malonyl-CoA. This is Acetyl-coenzyme A carboxylase carboxyl transferase subunit alpha from Nitrobacter hamburgensis (strain DSM 10229 / NCIMB 13809 / X14).